A 105-amino-acid chain; its full sequence is Integration host factor (105 aa).

The H2TH motif, binds DNA motif lies at 64–71 (LPKVGKVK). The tract at residues 82–94 (APTRRLRGLGDRQ) is lid, binds DNA.

The protein belongs to the actinobacterial IHF (aIHF) family. In terms of assembly, homodimer in solution. Binds DNA as a monomer.

The protein localises to the cytoplasm. Its function is as follows. A nucleoid-associated protein (NAP) required for septum formation and normal cell division as well as for DNA segregation. Binds about 135 sites across the chromosome, most of which are genes involved in virulence; most DNA-binding sites are immediately upstream of transcription start sites. When mIHF is depleted most of the genes are down-regulated. Binds supercoiled and linear dsDNA in a concentration-dependent manner, probably non-sequence specifically. Binding compacts DNA, protecting it from degradation. Initial binding to supercoiled DNA opens it fully, followed by bending and compaction. Bends and thus compacts linear DNA. Binds DNA via 2 sites, forms left-handed loops on linear DNA; at low concentrations unwinds larger cosmids (42.6 kb) then collapses and condenses DNA as protein levels rise. Forms mostly left-handed loops on condensing cosmid DNA. This Mycobacterium tuberculosis (strain ATCC 25618 / H37Rv) protein is Integration host factor.